Here is a 302-residue protein sequence, read N- to C-terminus: Protoheme IX farnesyltransferase 1 (302 aa).

9 consecutive transmembrane segments (helical) span residues 30 to 50, 52 to 72, 102 to 122, 124 to 144, 152 to 172, 178 to 198, 224 to 244, 245 to 265, and 282 to 302; these read VVALMLLTVLVGMCLALPGAV, LQPLIFGLLGIGMMAGAAAAF, ALTFSISLAVLGFVLLYTLVN, LTAWLTFASLLGYAVVYTAYL, IVVGGLAGAMPPLLGWTSVTG, ALLLVIIIFAWTPPHFWALAI, CILLYTILLAIACLLPVLVGM, CGPLYLVGSTLLSCGFIYKSW, and FSIYHLMLLFIVLLVDHYLWV.

The protein belongs to the UbiA prenyltransferase family. Protoheme IX farnesyltransferase subfamily.

The protein localises to the cell inner membrane. The catalysed reaction is heme b + (2E,6E)-farnesyl diphosphate + H2O = Fe(II)-heme o + diphosphate. The protein operates within porphyrin-containing compound metabolism; heme O biosynthesis; heme O from protoheme: step 1/1. Its function is as follows. Converts heme B (protoheme IX) to heme O by substitution of the vinyl group on carbon 2 of heme B porphyrin ring with a hydroxyethyl farnesyl side group. This chain is Protoheme IX farnesyltransferase 1, found in Shewanella woodyi (strain ATCC 51908 / MS32).